A 363-amino-acid polypeptide reads, in one-letter code: Protein LEG1 homolog (363 aa).

An N-terminal signal peptide occupies residues 1–19 (MQCVWTLSLLQLVALWANA). N-linked (GlcNAc...) asparagine glycosylation is found at Asn79, Asn261, and Asn292.

The protein belongs to the LEG1 family.

It localises to the secreted. In terms of biological role, may be involved in early liver development. This Oncorhynchus mykiss (Rainbow trout) protein is Protein LEG1 homolog.